A 723-amino-acid chain; its full sequence is Epidermal growth factor receptor kinase substrate 8-like protein 1 (723 aa).

Residues 35 to 164 form the PTB domain; that stretch reads QYPVNHLVTF…LHNYRSGRGE (130 aa). Basic and acidic residues predominate over residues 162–183; it reads RGERRAAALRATQEELQRDRSP. Disordered regions lie at residues 162-247, 442-477, 537-589, and 609-636; these read RGER…PRGP, KQLQHERRRRQQSAPQVAVNGHRDLEPESEPQLESE, GPRL…GLDP, and LAQGRSGPSRAVPGPRAPEPQLSPGSDA. Phosphoserine is present on Ser-182. Residue Thr-187 is modified to Phosphothreonine. Residues 478 to 537 enclose the SH3 domain; the sequence is TAGKWVLCNYDFQARNSSELSVKQRDVLEVLDDSRKWWKVRDPAGQEGYVPYNILTPYPG. Polar residues predominate over residues 543-552; it reads SQSPARSLNS. The segment covering 553–568 has biased composition (pro residues); the sequence is TPPPPPAPAPAPPPAL. A compositionally biased stretch (basic and acidic residues) spans 571–580; sequence PRWDRPRWDS. Residues 689 to 719 adopt a coiled-coil conformation; the sequence is VQRSLLEDKEKVSELEAVMEKQKKKVEGEVE.

Belongs to the EPS8 family. In terms of assembly, interacts with ABI1. Part of a complex that contains SOS1, ABI1 and EPS8L2. Associates with F-actin. As to expression, detected in placenta.

The protein localises to the cytoplasm. Stimulates guanine exchange activity of SOS1. May play a role in membrane ruffling and remodeling of the actin cytoskeleton. This chain is Epidermal growth factor receptor kinase substrate 8-like protein 1 (EPS8L1), found in Homo sapiens (Human).